Reading from the N-terminus, the 317-residue chain is Phospho-N-acetylmuramoyl-pentapeptide-transferase (317 aa).

9 consecutive transmembrane segments (helical) span residues 4 to 24 (LIYS…ILIP), 49 to 69 (TPTM…AVIV), 76 to 96 (AMIA…DDTL), 112 to 132 (MILL…NPYI), 147 to 167 (LGVF…NAVN), 186 to 206 (FLAL…CAIL), 223 to 243 (IFMG…VAMI), 246 to 266 (LPLL…SVIF), and 297 to 317 (RVVS…FLSL).

Belongs to the glycosyltransferase 4 family. MraY subfamily. Requires Mg(2+) as cofactor.

The protein resides in the cell membrane. The enzyme catalyses UDP-N-acetyl-alpha-D-muramoyl-L-alanyl-gamma-D-glutamyl-meso-2,6-diaminopimeloyl-D-alanyl-D-alanine + di-trans,octa-cis-undecaprenyl phosphate = di-trans,octa-cis-undecaprenyl diphospho-N-acetyl-alpha-D-muramoyl-L-alanyl-D-glutamyl-meso-2,6-diaminopimeloyl-D-alanyl-D-alanine + UMP. It participates in cell wall biogenesis; peptidoglycan biosynthesis. Functionally, catalyzes the initial step of the lipid cycle reactions in the biosynthesis of the cell wall peptidoglycan: transfers peptidoglycan precursor phospho-MurNAc-pentapeptide from UDP-MurNAc-pentapeptide onto the lipid carrier undecaprenyl phosphate, yielding undecaprenyl-pyrophosphoryl-MurNAc-pentapeptide, known as lipid I. This chain is Phospho-N-acetylmuramoyl-pentapeptide-transferase, found in Clostridium kluyveri (strain NBRC 12016).